The chain runs to 727 residues: Glucans biosynthesis glucosyltransferase H (727 aa).

Positions 18–43 (SAMPNERPGAMEPQSLSQMPEGFPRR) are disordered. Transmembrane regions (helical) follow at residues 58 to 78 (FFVV…MGAV), 94 to 114 (LFAI…AGFF), 278 to 298 (LQQF…GWWV), 408 to 428 (IMAY…LMLA), 460 to 480 (LFYI…LLLL), 496 to 516 (ILSV…MMFI), and 572 to 592 (LLAW…ISAW).

Belongs to the glycosyltransferase 2 family. OpgH subfamily.

It localises to the cell inner membrane. It participates in glycan metabolism; osmoregulated periplasmic glucan (OPG) biosynthesis. Its function is as follows. Involved in the biosynthesis of osmoregulated periplasmic glucans (OPGs). The polypeptide is Glucans biosynthesis glucosyltransferase H (Shewanella sp. (strain ANA-3)).